The primary structure comprises 811 residues: TLR4 interactor with leucine rich repeats (811 aa).

The signal sequence occupies residues Met-1–Pro-25. Positions Val-26–Ser-57 constitute an LRRNT domain. Topologically, residues Val-26–Gln-696 are extracellular. LRR repeat units lie at residues Val-61–Arg-81, Gln-84–Lys-105, Arg-108–Pro-129, Lys-132–Gly-153, Ser-156–Pro-177, Asn-180–Gln-201, Lys-204–Ala-223, Ser-230–His-251, Arg-254–Gly-275, Ala-278–Pro-299, Ser-302–His-323, and Arg-326–Ala-347. N-linked (GlcNAc...) asparagine glycosylation is present at Asn-73. Asn-209 is a glycosylation site (N-linked (GlcNAc...) asparagine). The LRRCT domain maps to Asn-359–Asp-416. Residues Leu-484 to Arg-549 are disordered. Composition is skewed to low complexity over residues Gln-492–Ser-508 and Pro-530–Gly-544. N-linked (GlcNAc...) asparagine glycosylation occurs at Asn-589. A helical membrane pass occupies residues Leu-697–Trp-717. The Cytoplasmic portion of the chain corresponds to Ala-718 to Asp-811. A Phosphoserine modification is found at Ser-798.

Belongs to the lipopolysaccharide (LPS) receptor, a multi-protein complex containing at least CD14, MD-2 and TLR4. Interacts with TLR4; this interaction is greatly enhanced by LPS stimulation. Interacts with LPS. In terms of processing, N-glycolysaled. Highly expressed in the brain, ovary, small intestine and spleen.

Its subcellular location is the membrane. In terms of biological role, component of the TLR4 signaling complex. Mediates the innate immune response to bacterial lipopolysaccharide (LPS) leading to cytokine secretion. The chain is TLR4 interactor with leucine rich repeats (TRIL) from Homo sapiens (Human).